A 116-amino-acid chain; its full sequence is U11-theraphotoxin-Hhn1c (116 aa).

The N-terminal stretch at 1–21 (MNTVRVTFLLVFVLAVSLGQA) is a signal peptide. Residues 22–74 (DKDENRMEMQEKTEQGKSYLDFAENLLLQKLEELEAKLLEEDSEESRNSRQKR) constitute a propeptide that is removed on maturation. The disordered stretch occupies residues 61–83 (EEDSEESRNSRQKRCIGEGVPCD). Disulfide bonds link C75–C90, C82–C95, and C89–C110.

It belongs to the neurotoxin 14 (magi-1) family. 01 (HNTX-16) subfamily. As to expression, expressed by the venom gland.

It is found in the secreted. Functionally, probable ion channel inhibitor. In Cyriopagopus hainanus (Chinese bird spider), this protein is U11-theraphotoxin-Hhn1c.